A 315-amino-acid chain; its full sequence is Ribosomal RNA small subunit methyltransferase H (315 aa).

S-adenosyl-L-methionine-binding positions include 35–37 (GGH), aspartate 55, phenylalanine 79, aspartate 101, and glutamine 108.

This sequence belongs to the methyltransferase superfamily. RsmH family.

It is found in the cytoplasm. The enzyme catalyses cytidine(1402) in 16S rRNA + S-adenosyl-L-methionine = N(4)-methylcytidine(1402) in 16S rRNA + S-adenosyl-L-homocysteine + H(+). In terms of biological role, specifically methylates the N4 position of cytidine in position 1402 (C1402) of 16S rRNA. The sequence is that of Ribosomal RNA small subunit methyltransferase H from Photobacterium profundum (strain SS9).